Reading from the N-terminus, the 57-residue chain is Large ribosomal subunit protein bL32 (57 aa).

It belongs to the bacterial ribosomal protein bL32 family.

The sequence is that of Large ribosomal subunit protein bL32 from Staphylococcus haemolyticus (strain JCSC1435).